The sequence spans 1025 residues: Adenylate-forming reductase 03009 (1025 aa).

The segment at 38–422 is adenylation (A) domain; sequence FEFHAKSNPQ…LGRIDNQVKI (385 aa). AMP-binding positions include 332–333 and 412–415; these read VT and HLGR. Residues 556–638 are thiolation and peptide carrier (T) domain; it reads SLGSTNTKIS…AILIWICVKK (83 aa). The thioester reductase (TR) domain stretch occupies residues 682–900; that stretch reads FIRRTAARVY…PPTKLWVKGV (219 aa). Residues 685-688, 769-771, and tyrosine 840 contribute to the NADP(+) site; these read RTAA and SAL.

Belongs to the adenylate-forming reductase family.

Its function is as follows. Adenylate-forming reductase, a natural product biosynthesis enzyme that resembles non-ribosomal peptide synthetases, yet serves to modify one substrate, rather than to condense two or more building blocks. The A-domain preferentially accepts L-serine, L-alanine and L-valine as substrates. The natural product of the enzyme is not yet known. The sequence is that of Adenylate-forming reductase 03009 from Coprinopsis cinerea (strain Okayama-7 / 130 / ATCC MYA-4618 / FGSC 9003) (Inky cap fungus).